A 355-amino-acid polypeptide reads, in one-letter code: Uroporphyrinogen decarboxylase (355 aa).

Substrate contacts are provided by residues 27–31, Asp78, Tyr155, Ser210, and His328; that span reads RQAGR.

This sequence belongs to the uroporphyrinogen decarboxylase family. As to quaternary structure, homodimer.

The protein resides in the cytoplasm. The enzyme catalyses uroporphyrinogen III + 4 H(+) = coproporphyrinogen III + 4 CO2. The protein operates within porphyrin-containing compound metabolism; protoporphyrin-IX biosynthesis; coproporphyrinogen-III from 5-aminolevulinate: step 4/4. Its function is as follows. Catalyzes the decarboxylation of four acetate groups of uroporphyrinogen-III to yield coproporphyrinogen-III. The polypeptide is Uroporphyrinogen decarboxylase (Pseudomonas aeruginosa (strain LESB58)).